Consider the following 155-residue polypeptide: Ribosomal RNA large subunit methyltransferase H (155 aa).

S-adenosyl-L-methionine is bound by residues L72, G103, and 122-127; that span reads LSKLTM.

Belongs to the RNA methyltransferase RlmH family. Homodimer.

The protein localises to the cytoplasm. It catalyses the reaction pseudouridine(1915) in 23S rRNA + S-adenosyl-L-methionine = N(3)-methylpseudouridine(1915) in 23S rRNA + S-adenosyl-L-homocysteine + H(+). Its function is as follows. Specifically methylates the pseudouridine at position 1915 (m3Psi1915) in 23S rRNA. The polypeptide is Ribosomal RNA large subunit methyltransferase H (Methylobacillus flagellatus (strain ATCC 51484 / DSM 6875 / VKM B-1610 / KT)).